Here is a 31-residue protein sequence, read N- to C-terminus: Phallacidin proprotein 1 (31 aa).

Residues 1–10 (MSDINATRLP) constitute a propeptide that is removed on maturation. Positions 11 to 17 (AWLVDCP) form a cross-link, cyclopeptide (Ala-Pro). The 2'-cysteinyl-6'-hydroxytryptophan sulfoxide (Trp-Cys) cross-link spans 12 to 16 (WLVDC). Positions 18-31 (CVGDDVNRLLTRGE) are excised as a propeptide.

This sequence belongs to the MSDIN fungal toxin family. In terms of processing, processed by the macrocyclase-peptidase enzyme POPB to yield a toxic cyclic heptapeptide. POPB first removes 10 residues from the N-terminus. Conformational trapping of the remaining peptide forces the enzyme to release this intermediate rather than proceed to macrocyclization. The enzyme rebinds the remaining peptide in a different conformation and catalyzes macrocyclization of the N-terminal 7 residues.

Its function is as follows. Major toxin that belongs to the bicyclic heptapeptides called phallotoxins. Although structurally related to amatoxins, phallotoxins have a different mode of action, which is the stabilization of F-actin. Phallotoxins are poisonous when administered parenterally, but not orally because of poor absorption. This chain is Phallacidin proprotein 1 (PHA1_2), found in Amanita bisporigera (Destroying angel).